Reading from the N-terminus, the 370-residue chain is Histidinol-phosphate aminotransferase 1 (370 aa).

Residue K222 is modified to N6-(pyridoxal phosphate)lysine.

It belongs to the class-II pyridoxal-phosphate-dependent aminotransferase family. Histidinol-phosphate aminotransferase subfamily. In terms of assembly, homodimer. The cofactor is pyridoxal 5'-phosphate.

The catalysed reaction is L-histidinol phosphate + 2-oxoglutarate = 3-(imidazol-4-yl)-2-oxopropyl phosphate + L-glutamate. It participates in amino-acid biosynthesis; L-histidine biosynthesis; L-histidine from 5-phospho-alpha-D-ribose 1-diphosphate: step 7/9. The protein is Histidinol-phosphate aminotransferase 1 of Bacillus thuringiensis subsp. konkukian (strain 97-27).